A 295-amino-acid chain; its full sequence is UDP-N-acetylenolpyruvoylglucosamine reductase (295 aa).

Residues 27-194 form the FAD-binding PCMH-type domain; the sequence is GVGGEAEVWF…TRVRLKLRRS (168 aa). Residue Arg174 is part of the active site. Cys221 serves as the catalytic Proton donor. Glu287 is an active-site residue.

The protein belongs to the MurB family. FAD serves as cofactor.

It is found in the cytoplasm. The enzyme catalyses UDP-N-acetyl-alpha-D-muramate + NADP(+) = UDP-N-acetyl-3-O-(1-carboxyvinyl)-alpha-D-glucosamine + NADPH + H(+). It participates in cell wall biogenesis; peptidoglycan biosynthesis. Functionally, cell wall formation. The chain is UDP-N-acetylenolpyruvoylglucosamine reductase from Deinococcus geothermalis (strain DSM 11300 / CIP 105573 / AG-3a).